The sequence spans 204 residues: UPF0637 protein SAS1041 (204 aa).

Belongs to the UPF0637 family.

In Staphylococcus aureus (strain MSSA476), this protein is UPF0637 protein SAS1041.